The following is a 267-amino-acid chain: MTHRIAFIGLGAIASDVAAGLLADAAQPCQLAALTRNAADLPPALAGRVALLDGLPGLLAWRPDLVVEAAGQQAIAEHAEGCLRAGLDMIICSAGALADDALRARLIAAAEAGGARIRVPAGAIAGLDYLQAVAGRDDAEVVYESRKPVAAWRAELPGMGIDPDTLAESRTLFSGPAREAALRFPKNLNVAATLALAGIGMTRTRVEVVVDPRARGNQHRIQVRSPLGEMQIELVNAPSPANPKTSWLVAQSVLATIRRHLARFTIG.

A123 and N189 together coordinate NAD(+). H219 is an active-site residue.

Belongs to the L-aspartate dehydrogenase family.

It carries out the reaction L-aspartate + NADP(+) + H2O = oxaloacetate + NH4(+) + NADPH + H(+). The catalysed reaction is L-aspartate + NAD(+) + H2O = oxaloacetate + NH4(+) + NADH + H(+). The protein operates within cofactor biosynthesis; NAD(+) biosynthesis; iminoaspartate from L-aspartate (dehydrogenase route): step 1/1. In terms of biological role, specifically catalyzes the NAD or NADP-dependent dehydrogenation of L-aspartate to iminoaspartate. The polypeptide is L-aspartate dehydrogenase 2 (Bordetella bronchiseptica (strain ATCC BAA-588 / NCTC 13252 / RB50) (Alcaligenes bronchisepticus)).